A 613-amino-acid chain; its full sequence is Chaperone protein DnaK (613 aa).

Residues 579–613 (MYQSASSTTQTGSGNQNSSKQENDKTVDAEYKEKS) are disordered. The segment covering 581–597 (QSASSTTQTGSGNQNSS) has biased composition (low complexity). Residues 599–613 (QENDKTVDAEYKEKS) are compositionally biased toward basic and acidic residues.

This sequence belongs to the heat shock protein 70 family.

Acts as a chaperone. In Thermoplasma volcanium (strain ATCC 51530 / DSM 4299 / JCM 9571 / NBRC 15438 / GSS1), this protein is Chaperone protein DnaK.